A 404-amino-acid polypeptide reads, in one-letter code: Cysteine desulfurase IscS (404 aa).

Pyridoxal 5'-phosphate is bound by residues 75–76, asparagine 155, glutamine 183, and 203–205; these read AT and SAH. Lysine 206 is subject to N6-(pyridoxal phosphate)lysine. Threonine 243 is a binding site for pyridoxal 5'-phosphate. The active-site Cysteine persulfide intermediate is cysteine 328. Cysteine 328 is a [2Fe-2S] cluster binding site.

Belongs to the class-V pyridoxal-phosphate-dependent aminotransferase family. NifS/IscS subfamily. As to quaternary structure, homodimer. Forms a heterotetramer with IscU, interacts with other sulfur acceptors. Pyridoxal 5'-phosphate serves as cofactor.

It localises to the cytoplasm. It catalyses the reaction (sulfur carrier)-H + L-cysteine = (sulfur carrier)-SH + L-alanine. The protein operates within cofactor biosynthesis; iron-sulfur cluster biosynthesis. Functionally, master enzyme that delivers sulfur to a number of partners involved in Fe-S cluster assembly, tRNA modification or cofactor biosynthesis. Catalyzes the removal of elemental sulfur atoms from cysteine to produce alanine. Functions as a sulfur delivery protein for Fe-S cluster synthesis onto IscU, an Fe-S scaffold assembly protein, as well as other S acceptor proteins. This Vesicomyosocius okutanii subsp. Calyptogena okutanii (strain HA) protein is Cysteine desulfurase IscS.